The following is a 184-amino-acid chain: UPF0398 protein OB1025 (184 aa).

Belongs to the UPF0398 family.

This chain is UPF0398 protein OB1025, found in Oceanobacillus iheyensis (strain DSM 14371 / CIP 107618 / JCM 11309 / KCTC 3954 / HTE831).